The following is a 362-amino-acid chain: Probable protein phosphatase 2C 24 (362 aa).

The PPM-type phosphatase domain occupies 77-360; the sequence is RYGVSSVCGR…DNVSVVVIDL (284 aa). Residues Asp-117, Gly-118, Asp-295, and Asp-351 each contribute to the Mn(2+) site.

This sequence belongs to the PP2C family. Mg(2+) serves as cofactor. Mn(2+) is required as a cofactor.

It catalyses the reaction O-phospho-L-seryl-[protein] + H2O = L-seryl-[protein] + phosphate. The enzyme catalyses O-phospho-L-threonyl-[protein] + H2O = L-threonyl-[protein] + phosphate. The chain is Probable protein phosphatase 2C 24 from Arabidopsis thaliana (Mouse-ear cress).